The following is a 198-amino-acid chain: Outer-membrane lipoprotein carrier protein (198 aa).

The N-terminal stretch at 1-17 is a signal peptide; it reads MKKFLFSLCLLSSTVLA.

This sequence belongs to the LolA family. In terms of assembly, monomer.

Its subcellular location is the periplasm. Its function is as follows. Participates in the translocation of lipoproteins from the inner membrane to the outer membrane. Only forms a complex with a lipoprotein if the residue after the N-terminal Cys is not an aspartate (The Asp acts as a targeting signal to indicate that the lipoprotein should stay in the inner membrane). This chain is Outer-membrane lipoprotein carrier protein, found in Aliivibrio fischeri (strain MJ11) (Vibrio fischeri).